The sequence spans 540 residues: DNA-(apurinic or apyrimidinic site) endonuclease (540 aa).

Residues Asn-206 and Glu-239 each contribute to the Mg(2+) site. Residues 256–276 (NNKVYGGKKNEGEERNRGSVK) form a disordered region. The segment covering 263–276 (KKNEGEERNRGSVK) has biased composition (basic and acidic residues). Residues Asp-400, Asn-402, Asp-530, and His-531 each coordinate Mg(2+). The Proton acceptor role is filled by His-531.

The protein belongs to the DNA repair enzymes AP/ExoA family. Requires Mg(2+) as cofactor. The cofactor is Mn(2+). Post-translationally, may be proteolytically cleaved.

It localises to the mitochondrion. It carries out the reaction Exonucleolytic cleavage in the 3'- to 5'-direction to yield nucleoside 5'-phosphates.. In terms of biological role, multifunctional protein that plays a central role in mitochondrial DNA base excision repair pathway induced by oxidative stress. Has apurinic/apyrimidinic (AP) endonuclease activity towards double-stranded DNA (dsDNA). Has nucleotide incision repair (NIR) activity; acts on dsDNA with oxidized bases thymine glycol and 5,6-dihydro-2'-deoxyuridine. Has 3'-5' exonuclease; can use dsDNA templates with 3'-OH termini including blunt-end, gapped and mismatched 3'-recessed. Has 3'-phosphatase activity; cleaves 3'-phosphate from blunt, recessed and gapped dsDNA templates, followed by 3'-5' exonuclease activity. Has RNase H-like activity; cleaves RNA on 3'-recessed RNA-DNA duplex. Plays a role in merosome infection of host erythrocytes. The sequence is that of DNA-(apurinic or apyrimidinic site) endonuclease from Plasmodium berghei (strain Anka).